Reading from the N-terminus, the 243-residue chain is Pyridoxine 5'-phosphate synthase (243 aa).

N9 lines the 3-amino-2-oxopropyl phosphate pocket. 1-deoxy-D-xylulose 5-phosphate is bound at residue 11 to 12; that stretch reads DH. Residue R20 coordinates 3-amino-2-oxopropyl phosphate. H45 serves as the catalytic Proton acceptor. Residues R47 and H52 each contribute to the 1-deoxy-D-xylulose 5-phosphate site. E72 (proton acceptor) is an active-site residue. T102 provides a ligand contact to 1-deoxy-D-xylulose 5-phosphate. H193 functions as the Proton donor in the catalytic mechanism. Residues G194 and 215–216 each bind 3-amino-2-oxopropyl phosphate; that span reads GH.

Belongs to the PNP synthase family. Homooctamer; tetramer of dimers.

It is found in the cytoplasm. It catalyses the reaction 3-amino-2-oxopropyl phosphate + 1-deoxy-D-xylulose 5-phosphate = pyridoxine 5'-phosphate + phosphate + 2 H2O + H(+). It participates in cofactor biosynthesis; pyridoxine 5'-phosphate biosynthesis; pyridoxine 5'-phosphate from D-erythrose 4-phosphate: step 5/5. Functionally, catalyzes the complicated ring closure reaction between the two acyclic compounds 1-deoxy-D-xylulose-5-phosphate (DXP) and 3-amino-2-oxopropyl phosphate (1-amino-acetone-3-phosphate or AAP) to form pyridoxine 5'-phosphate (PNP) and inorganic phosphate. This Pectobacterium atrosepticum (strain SCRI 1043 / ATCC BAA-672) (Erwinia carotovora subsp. atroseptica) protein is Pyridoxine 5'-phosphate synthase.